The following is a 64-amino-acid chain: Large ribosomal subunit protein uL29 (64 aa).

This sequence belongs to the universal ribosomal protein uL29 family.

The sequence is that of Large ribosomal subunit protein uL29 from Nitrosomonas europaea (strain ATCC 19718 / CIP 103999 / KCTC 2705 / NBRC 14298).